The following is a 503-amino-acid chain: D-alanine--D-alanyl carrier protein ligase (503 aa).

151 to 152 (TS) contacts ATP. Asp-196 is a binding site for D-alanine. 291–296 (NTYGPT) is a binding site for ATP. Residue Val-300 coordinates D-alanine. Positions 382 and 491 each coordinate ATP. A D-alanine-binding site is contributed by Lys-491.

This sequence belongs to the ATP-dependent AMP-binding enzyme family. DltA subfamily.

Its subcellular location is the cytoplasm. It catalyses the reaction holo-[D-alanyl-carrier protein] + D-alanine + ATP = D-alanyl-[D-alanyl-carrier protein] + AMP + diphosphate. It functions in the pathway cell wall biogenesis; lipoteichoic acid biosynthesis. In terms of biological role, catalyzes the first step in the D-alanylation of lipoteichoic acid (LTA), the activation of D-alanine and its transfer onto the D-alanyl carrier protein (Dcp) DltC. In an ATP-dependent two-step reaction, forms a high energy D-alanyl-AMP intermediate, followed by transfer of the D-alanyl residue as a thiol ester to the phosphopantheinyl prosthetic group of the Dcp. D-alanylation of LTA plays an important role in modulating the properties of the cell wall in Gram-positive bacteria, influencing the net charge of the cell wall. In Bacillus velezensis (strain DSM 23117 / BGSC 10A6 / LMG 26770 / FZB42) (Bacillus amyloliquefaciens subsp. plantarum), this protein is D-alanine--D-alanyl carrier protein ligase.